An 808-amino-acid polypeptide reads, in one-letter code: Quinoprotein glucose dehydrogenase (808 aa).

Positions Met1–Ala33 are cleaved as a signal peptide. Helical transmembrane passes span Ile35–Leu54, Asn59–Trp76, Ile94–Ser108, and Gly123–Thr138. Asp470 functions as the Proton acceptor in the catalytic mechanism. The disordered stretch occupies residues Val514–Lys545. The span at Thr531–Thr541 shows a compositional bias: polar residues.

The protein belongs to the bacterial PQQ dehydrogenase family. Requires pyrroloquinoline quinone as cofactor.

The protein resides in the cell inner membrane. It carries out the reaction a ubiquinone + D-glucose = D-glucono-1,5-lactone + a ubiquinol. The protein is Quinoprotein glucose dehydrogenase (gdh) of Gluconobacter oxydans (strain 621H) (Gluconobacter suboxydans).